The chain runs to 415 residues: Proline-serine-threonine phosphatase-interacting protein 1 (415 aa).

The F-BAR domain occupies Leu-5 to Asp-264. Coiled-coil stretches lie at residues Leu-94–Leu-133 and Ser-162–Ala-215. Ser-318 carries the phosphoserine modification. At Tyr-344 the chain carries Phosphotyrosine; by ABL1. In terms of domain architecture, SH3 spans Ser-358–Leu-415.

Homodimer. Homotrimer. Interacts (via coiled-coil domain) with CD2AP, PTPN12 and PTPN18. Interacts (via SH3 domain) with ABL1 and WAS. Interacts (via SH3 and coiled-coil domains) with MEFV (via B-box zinc finger); the interaction allows binding of MEFV to PYCARD and facilitates formation of PYCARD pyroptosomes. Interacts with DNM2 and FASLG. Interacts with CD2. In terms of processing, dephosphorylated on Tyr-344 by PTPN18, this event negatively regulates the association of PSTPIP1 with SH2 domain-containing proteins as tyrosine kinase. Phosphorylation of Tyr-344 is probably required for subsequent phosphorylation at other tyrosine residues. Phosphorylation is induced by activation of the EGFR and PDGFR in a ABL1 dependent manner. The phosphorylation regulates the interaction with WAS and with MEFV. In terms of tissue distribution, highly expressed in adult lung and spleen, and weakly expressed in testis, muscle, kidney, brain and heart. Highly expressed in spleen and thymus, moderately in lung, brain and muscle, and weakly expressed in heart and liver (at protein level).

The protein localises to the cytoplasm. Its subcellular location is the perinuclear region. It is found in the cell projection. It localises to the lamellipodium. The protein resides in the cleavage furrow. The protein localises to the cytoskeleton. Its subcellular location is the cell membrane. It is found in the uropodium. In terms of biological role, involved in regulation of the actin cytoskeleton. May regulate WAS actin-bundling activity. Bridges the interaction between ABL1 and PTPN18 leading to ABL1 dephosphorylation. May play a role as a scaffold protein between PTPN12 and WAS and allow PTPN12 to dephosphorylate WAS. Has the potential to physically couple CD2 and CD2AP to WAS. Acts downstream of CD2 and CD2AP to recruit WAS to the T-cell:APC contact site so as to promote the actin polymerization required for synapse induction during T-cell activation. Down-regulates CD2-stimulated adhesion through the coupling of PTPN12 to CD2. Also has a role in innate immunity and the inflammatory response. Recruited to inflammasomes by MEFV. Induces formation of pyroptosomes, large supramolecular structures composed of oligomerized PYCARD dimers which form prior to inflammatory apoptosis. Binding to MEFV allows MEFV to bind to PYCARD and facilitates pyroptosome formation. Regulates endocytosis and cell migration in neutrophils. The chain is Proline-serine-threonine phosphatase-interacting protein 1 (Pstpip1) from Mus musculus (Mouse).